Here is a 221-residue protein sequence, read N- to C-terminus: Carotenogenesis protein CarR (221 aa).

A run of 6 helical transmembrane segments spans residues Leu56–Leu76, Ala79–Pro99, Leu107–His127, Val136–Leu156, Ala166–Glu186, and His191–Ser211.

The protein localises to the cell inner membrane. Negative regulator of the carotenoid synthesis regulon. It is probably inactivated by protoporphyrin IX in the presence of blue light. Inactivation of CarR leads to loss of negative control over the carotenogenesis protein CarQ. This Myxococcus xanthus protein is Carotenogenesis protein CarR (carR).